Here is a 636-residue protein sequence, read N- to C-terminus: Translation factor GUF1, mitochondrial (636 aa).

Positions 35 to 218 (SNYRNFSIVA…AIIRDIPGPR (184 aa)) constitute a tr-type G domain. GTP-binding positions include 44–51 (AHVDHGKS), 111–115 (DTPGH), and 165–168 (NKID).

This sequence belongs to the TRAFAC class translation factor GTPase superfamily. Classic translation factor GTPase family. LepA subfamily.

Its subcellular location is the mitochondrion inner membrane. It catalyses the reaction GTP + H2O = GDP + phosphate + H(+). Its function is as follows. Promotes mitochondrial protein synthesis. May act as a fidelity factor of the translation reaction, by catalyzing a one-codon backward translocation of tRNAs on improperly translocated ribosomes. Binds to mitochondrial ribosomes in a GTP-dependent manner. This is Translation factor GUF1, mitochondrial from Debaryomyces hansenii (strain ATCC 36239 / CBS 767 / BCRC 21394 / JCM 1990 / NBRC 0083 / IGC 2968) (Yeast).